A 549-amino-acid chain; its full sequence is Cation/acetate symporter ActP (549 aa).

The Periplasmic portion of the chain corresponds to 1–32; the sequence is MKRVLTALAATLPFAANAADAISGAVERQPTN. Residues 33–55 traverse the membrane as a helical segment; the sequence is WQAIIMFLIFVVFTLGITYWASK. Residues 56-75 are Cytoplasmic-facing; the sequence is RVRSRSDYYTAGGNITGFQN. The chain crosses the membrane as a helical span at residues 76–98; sequence GLAIAGDYMSAASFLGISALVFT. The Periplasmic portion of the chain corresponds to 99 to 102; that stretch reads SGYD. The chain crosses the membrane as a helical span at residues 103–125; that stretch reads GLIYSLGFLVGWPIILFLIAERL. The Cytoplasmic segment spans residues 126–145; it reads RNLGRYTSADVASYRLKQGP. The chain crosses the membrane as a helical span at residues 146-168; it reads IRILSACGSLVVVALYLIAQMVG. Over 169 to 182 the chain is Periplasmic; the sequence is AGKLIELLFGLNYH. Residues 183 to 205 traverse the membrane as a helical segment; that stretch reads IAVVLVGVLMMMYVLFGGMLATT. At 206–211 the chain is on the cytoplasmic side; sequence WVQIIK. The helical transmembrane segment at 212-234 threads the bilayer; the sequence is AVLLLFGASFMAFMVMKHVGFSF. Over 235–260 the chain is Periplasmic; sequence NNLFSEAMAVHPKGVDIMKPGGLVKD. A helical membrane pass occupies residues 261-283; it reads PISALSLGLGLMFGTAGLPHILM. Over 284–302 the chain is Cytoplasmic; the sequence is RFFTVSDAREARKSVFYAT. The helical transmembrane segment at 303 to 325 threads the bilayer; sequence GFMGYFYILTFIIGFGAIMLVGA. Over 326–349 the chain is Periplasmic; the sequence is NPEYKDAAGHLIGGNNMAAVHLAN. The helical transmembrane segment at 350–372 threads the bilayer; it reads AVGGNLFLGFISAVAFATILAVV. Residues 373–401 lie on the Cytoplasmic side of the membrane; sequence ADLTLAGASAVSHDLYANVFKKGATEREE. A helical membrane pass occupies residues 402–424; it reads LRVSKITVLILGVIAIILGVLFE. Residues 425–427 lie on the Periplasmic side of the membrane; sequence NQN. The chain crosses the membrane as a helical span at residues 428–450; that stretch reads IAFMVGLAFAIAASCNFPIILLS. Residues 451-461 lie on the Cytoplasmic side of the membrane; it reads MYWSKLTTRGA. A helical membrane pass occupies residues 462–484; the sequence is MLGGWLGLITAVVLMILGPTIWV. The Periplasmic portion of the chain corresponds to 485-493; it reads QILGHEKAI. The helical transmembrane segment at 494–516 threads the bilayer; that stretch reads FPYEYPALFSISVAFLGIWFFSA. The Cytoplasmic segment spans residues 517-549; the sequence is TDNSAEGARERELFRAQFIRSQTGFGVEQGRAH.

It belongs to the sodium:solute symporter (SSF) (TC 2.A.21) family.

Its subcellular location is the cell inner membrane. Functionally, transports acetate. The chain is Cation/acetate symporter ActP (actP) from Shigella flexneri.